Reading from the N-terminus, the 287-residue chain is Pyridoxal 5'-phosphate synthase subunit PdxS (287 aa).

Asp21 provides a ligand contact to D-ribose 5-phosphate. Lys78 acts as the Schiff-base intermediate with D-ribose 5-phosphate in catalysis. Gly150 contacts D-ribose 5-phosphate. Arg162 contacts D-glyceraldehyde 3-phosphate. Residues Gly211 and 232–233 (GS) each bind D-ribose 5-phosphate.

It belongs to the PdxS/SNZ family. As to quaternary structure, in the presence of PdxT, forms a dodecamer of heterodimers.

The catalysed reaction is aldehydo-D-ribose 5-phosphate + D-glyceraldehyde 3-phosphate + L-glutamine = pyridoxal 5'-phosphate + L-glutamate + phosphate + 3 H2O + H(+). Its pathway is cofactor biosynthesis; pyridoxal 5'-phosphate biosynthesis. In terms of biological role, catalyzes the formation of pyridoxal 5'-phosphate from ribose 5-phosphate (RBP), glyceraldehyde 3-phosphate (G3P) and ammonia. The ammonia is provided by the PdxT subunit. Can also use ribulose 5-phosphate and dihydroxyacetone phosphate as substrates, resulting from enzyme-catalyzed isomerization of RBP and G3P, respectively. The protein is Pyridoxal 5'-phosphate synthase subunit PdxS of Tropheryma whipplei (strain TW08/27) (Whipple's bacillus).